The chain runs to 191 residues: Stress response regulator protein 1 (191 aa).

In terms of domain architecture, Response regulatory spans 62–181; that stretch reads SFLLVDDNEI…TNYILQKIEQ (120 aa). 4-aspartylphosphate is present on Asp114.

In terms of biological role, required for stress adaptation, morphogenesis and virulence. The protein is Stress response regulator protein 1 (SRR1) of Clavispora lusitaniae (strain ATCC 42720) (Yeast).